Here is a 292-residue protein sequence, read N- to C-terminus: tRNA pseudouridine synthase B (292 aa).

Asp-38 acts as the Nucleophile in catalysis.

Belongs to the pseudouridine synthase TruB family. Type 1 subfamily.

It catalyses the reaction uridine(55) in tRNA = pseudouridine(55) in tRNA. Responsible for synthesis of pseudouridine from uracil-55 in the psi GC loop of transfer RNAs. The chain is tRNA pseudouridine synthase B from Streptococcus pneumoniae serotype 4 (strain ATCC BAA-334 / TIGR4).